The sequence spans 1068 residues: Huntingtin-interacting protein 1-related protein (1068 aa).

At methionine 1 the chain carries N-acetylmethionine. Positions 23–151 (EREQFDKTQA…SFHLKHPQFP (129 aa)) constitute an ENTH domain. Positions 346-644 (GSMKDDRDLQ…LQDAVSKLDD (299 aa)) form a coiled coil. The segment at 582-610 (EALSQEQQRSSQEKGELRGQLAEKESQEQ) is disordered. Residues 592–608 (SQEKGELRGQLAEKESQ) show a composition bias toward basic and acidic residues. The region spanning 771–1012 (SLDVRQEELG…ELRKQHYVLA (242 aa)) is the I/LWEQ domain. An important for actin binding region spans residues 867–924 (RWTEGLISASKAVGWGATQLVESADKVVLHMGKYEELIVCSHEIAASTAQLVAASKVK). The segment at 1011 to 1068 (LAGGMGTPSEEEPSRPSPAPRSGATKKPPLAQKPSIAPRTDNQLDKKDGVYPAQLVNY) is disordered.

The protein belongs to the SLA2 family. As to quaternary structure, homodimer. Interacts with actin; homodimerization promotes actin binding. Interacts with CLTB. Interacts with HIP1. Interacts (via ENTH and I/LWEQ domains) with BCL2L10. Widely expressed. Expressed at lower levels in skeletal muscle and heart. The level of expression does not change appreciably during development.

It localises to the cytoplasm. The protein resides in the perinuclear region. Its subcellular location is the endomembrane system. It is found in the cytoplasmic vesicle. The protein localises to the clathrin-coated vesicle membrane. Its function is as follows. Component of clathrin-coated pits and vesicles, that may link the endocytic machinery to the actin cytoskeleton. Binds 3-phosphoinositides (via ENTH domain). May act through the ENTH domain to promote cell survival by stabilizing receptor tyrosine kinases following ligand-induced endocytosis. The sequence is that of Huntingtin-interacting protein 1-related protein (Hip1r) from Mus musculus (Mouse).